A 464-amino-acid polypeptide reads, in one-letter code: Isthmin-1 (464 aa).

The signal sequence occupies residues methionine 1–alanine 29. The N-linked (GlcNAc...) asparagine glycan is linked to asparagine 39. Disordered stretches follow at residues asparagine 50–aspartate 98, proline 135–serine 155, and serine 173–glycine 219. Polar residues predominate over residues valine 51–leucine 63. 2 stretches are compositionally biased toward basic and acidic residues: residues glutamate 66–alanine 76 and glutamate 138–asparagine 147. The 45-residue stretch at aspartate 218–proline 262 folds into the TSP type-1 domain. 3 disulfide bridges follow: cysteine 229-cysteine 256, cysteine 233-cysteine 261, and cysteine 244-cysteine 248. Residues leucine 289–glutamate 452 form the AMOP domain.

This sequence belongs to the isthmin family. Interacts with integrin ITGAV/ITGB5.

The protein localises to the secreted. Functionally, acts as an angiogenesis inhibitor. This Homo sapiens (Human) protein is Isthmin-1 (ISM1).